A 198-amino-acid polypeptide reads, in one-letter code: Nucleoid occlusion factor SlmA (198 aa).

Residues 10–70 enclose the HTH tetR-type domain; that stretch reads NRREEILQSL…SLIEFIEDSL (61 aa). A DNA-binding region (H-T-H motif) is located at residues 33–52; that stretch reads TTAKLAASVGVSEAALYRHF. The stretch at 117–144 forms a coiled coil; that stretch reads EQDRLQGRINQLFERIEAQLRQVLREKR.

It belongs to the nucleoid occlusion factor SlmA family. Homodimer. Interacts with FtsZ.

The protein localises to the cytoplasm. It localises to the nucleoid. Required for nucleoid occlusion (NO) phenomenon, which prevents Z-ring formation and cell division over the nucleoid. Acts as a DNA-associated cell division inhibitor that binds simultaneously chromosomal DNA and FtsZ, and disrupts the assembly of FtsZ polymers. SlmA-DNA-binding sequences (SBS) are dispersed on non-Ter regions of the chromosome, preventing FtsZ polymerization at these regions. The protein is Nucleoid occlusion factor SlmA of Salmonella typhi.